Reading from the N-terminus, the 168-residue chain is Peptidyl-Lys metalloendopeptidase (168 aa).

Intrachain disulfides connect Cys6–Cys76 and Cys78–Cys98. Position 118 (His118) interacts with Zn(2+). Glu119 is a catalytic residue. Residues His122 and Asp131 each coordinate Zn(2+).

Zn(2+) serves as cofactor.

It is found in the secreted. The catalysed reaction is Preferential cleavage in proteins: -Xaa-|-Lys- (in which Xaa may be Pro).. Inhibited by chelating agents such as EDTA and 1,10-phenanthroline. The sequence is that of Peptidyl-Lys metalloendopeptidase (MEP) from Pleurotus ostreatus (Oyster mushroom).